A 352-amino-acid polypeptide reads, in one-letter code: MTTDIFFNPMWDVRLTDTSLRDGSHHKRHQFTKDEVQAIVAALDVAGVPVIEVTHGDGLGGSSFNYGFSKTPEQELIKLAAETAKEAKIAFLMLPGVGTKEDIKEAQNNGGSICRIATHCTEADVSIQHFGLARELGLETVGFLMMSHTIPPEKLAQQARIMADAGCQCVYVVDSAGALVLEGVRDRVAALVAELGDDAQVGFHGHENLGLGVANSVEAVRAGAKQIDGSCRRFGAGAGNAPVEALIGVFDKIGVKTGIDFFDIADAAEEVVAPAMPAECLLDRNALIMGYSGVYSSFLKHAIRQSERYGVPAHQLLHRAGQRKLIGGQEDQLIDIALEIKREQESGAAAAR.

The 253-residue stretch at 13–265 (VRLTDTSLRD…KTGIDFFDIA (253 aa)) folds into the Pyruvate carboxyltransferase domain. 21–22 (RD) is a substrate binding site. Mn(2+) is bound at residue D22. The active-site Proton acceptor is H25. Substrate-binding residues include S175 and H204. Mn(2+) is bound by residues H204 and H206. Y295 is a binding site for substrate.

Belongs to the 4-hydroxy-2-oxovalerate aldolase family.

It catalyses the reaction (S)-4-hydroxy-2-oxopentanoate = acetaldehyde + pyruvate. This Mycobacterium avium (strain 104) protein is 4-hydroxy-2-oxovalerate aldolase.